The sequence spans 1320 residues: Transcriptional activator MN1 (1320 aa).

Residue methionine 1 is modified to N-acetylmethionine. 9 disordered regions span residues 1-26, 92-121, 147-219, 231-411, 423-442, 474-615, 629-819, 840-1150, and 1247-1273; these read MFGL…FNET, FGGQ…FGGP, PPFA…SLEP, LEYN…EYPI, SEPV…NQRL, NGSM…AGRL, SAWF…KDNL, GAPN…PDEI, and PWEK…SASQ. Residues 98–113 are compositionally biased toward basic residues; it reads HHGHPGSHHPHQHHPH. 2 stretches are compositionally biased toward low complexity: residues 202–214 and 291–309; these read SFHG…GSDS and QPPQ…QQQQ. Residues 338–366 are compositionally biased toward pro residues; it reads MQPPQQAPPPPQQQPPQQPPQQQPPPPPG. The segment covering 498 to 514 has biased composition (pro residues); sequence FTPPVPDSFPSGPPLQH. 2 stretches are compositionally biased toward low complexity: residues 523 to 550 and 564 to 578; these read QQQQ…QQQQ and RNQQ…LAQL. Composition is skewed to gly residues over residues 582–596 and 701–710; these read GDVG…GPVG and QFGGSLGGLG. The segment covering 759–768 has biased composition (low complexity); sequence SGPGVNSPPS. The span at 769 to 784 shows a compositional bias: gly residues; sequence AGGGGGSSGGGGGGGA. 2 stretches are compositionally biased toward low complexity: residues 798 to 809 and 895 to 905; these read SASKLGALSLGS and GTSSSGSKASG. Polar residues predominate over residues 914–930; sequence DGTSLSPNYTLESTSGN. 2 positions are modified to phosphoserine: serine 950 and serine 954. Over residues 973–984 the composition is skewed to low complexity; it reads GVSPGQQQASGA. Serine 1007 carries the post-translational modification Phosphoserine. Over residues 1048 to 1066 the composition is skewed to polar residues; that stretch reads EVSTSYANEDEVSSSSDNP. A Phosphoserine modification is found at serine 1081. Positions 1118-1128 are enriched in gly residues; that stretch reads YGGGGGPGHPG.

In terms of assembly, interacts with PBX1, PKNOX1, ZBTB24, E2F7, RING1. As to expression, widely expressed in fetal and adult tissues. Highest expression is observed in fetal brain and skeletal muscle, and adult skeletal muscle.

The protein resides in the nucleus. Its function is as follows. Transcriptional activator which specifically regulates expression of TBX22 in the posterior region of the developing palate. Required during later stages of palate development for growth and medial fusion of the palatal shelves. Promotes maturation and normal function of calvarial osteoblasts, including expression of the osteoclastogenic cytokine TNFSF11/RANKL. Necessary for normal development of the membranous bones of the skull. May play a role in tumor suppression. The sequence is that of Transcriptional activator MN1 (MN1) from Homo sapiens (Human).